We begin with the raw amino-acid sequence, 323 residues long: MTPAHPEKWPVHVVQGGVDRQLLKDCRDLLAAAEESDGNPSISEQTLVTMRAGDSADHSLLTLALYAPDEDSDPATGQDLAGFAVVVEEPDRSGVLEIAVHPSYRNQGVADRLVRALQDRRGFDGLKAWSHGNHEAAADLAARYGYAPVRELWKMRMTTAEADLPEAALPEGVSLRPFVPGQDEDAWLAVNSAAFAHHPEQGSLTRADLAARMEEDWFDPAGFLLAVDAGGRVLGFHWTKVHPRHGSHPAIGEVYVVGVAPEAQGSGLGKALTLAGIKYLQDLGLHAVMLYTDADNTPAVSLYRRLGFTRWDMDVMYGPVKEG.

1D-myo-inositol 2-(L-cysteinylamino)-2-deoxy-alpha-D-glucopyranoside is bound at residue E44. N-acetyltransferase domains lie at 77 to 176 (GQDL…VSLR) and 173 to 323 (VSLR…VKEG). Position 98–100 (98–100 (IAV)) interacts with acetyl-CoA. 3 residues coordinate 1D-myo-inositol 2-(L-cysteinylamino)-2-deoxy-alpha-D-glucopyranoside: E200, K240, and E253. Acetyl-CoA contacts are provided by residues 257–259 (VGV) and 264–270 (QGSGLGK). Y291 contacts 1D-myo-inositol 2-(L-cysteinylamino)-2-deoxy-alpha-D-glucopyranoside.

The protein belongs to the acetyltransferase family. MshD subfamily. As to quaternary structure, monomer.

It catalyses the reaction 1D-myo-inositol 2-(L-cysteinylamino)-2-deoxy-alpha-D-glucopyranoside + acetyl-CoA = mycothiol + CoA + H(+). In terms of biological role, catalyzes the transfer of acetyl from acetyl-CoA to desacetylmycothiol (Cys-GlcN-Ins) to form mycothiol. In Pseudarthrobacter chlorophenolicus (strain ATCC 700700 / DSM 12829 / CIP 107037 / JCM 12360 / KCTC 9906 / NCIMB 13794 / A6) (Arthrobacter chlorophenolicus), this protein is Mycothiol acetyltransferase.